The sequence spans 465 residues: Antithrombin-III (465 aa).

The N-terminal stretch at 1-32 (MYSPGAGSGAAGERKLCLLSLLLIGALGCAIC) is a signal peptide. 2 disulfide bridges follow: Cys-41-Cys-161 and Cys-54-Cys-128. Thr-64 carries the phosphothreonine modification. Ser-69 carries the phosphoserine modification. Trp-82 lines the heparin pocket. Residue Asn-129 is glycosylated (N-linked (GlcNAc...) asparagine). Position 162 (Arg-162) interacts with heparin. An N-linked (GlcNAc...) asparagine glycan is attached at Asn-168. Arg-178 provides a ligand contact to heparin. 2 N-linked (GlcNAc...) asparagine glycosylation sites follow: Asn-188 and Asn-225. Cysteines 280 and 463 form a disulfide.

This sequence belongs to the serpin family. Forms protease inhibiting heterodimer with TMPRSS7. Phosphorylated by FAM20C in the extracellular medium. Plasma.

Its subcellular location is the secreted. The protein resides in the extracellular space. Most important serine protease inhibitor in plasma that regulates the blood coagulation cascade. AT-III inhibits thrombin, matriptase-3/TMPRSS7, as well as factors IXa, Xa and XIa. Its inhibitory activity is greatly enhanced in the presence of heparin. The polypeptide is Antithrombin-III (Serpinc1) (Mus musculus (Mouse)).